Reading from the N-terminus, the 474-residue chain is Homeobox protein PKNOX2 (474 aa).

The tract at residues Met1–Ala42 is disordered. The segment covering Asp26–Ser38 has biased composition (polar residues). Positions Gly96–Asp179 constitute an MEIS N-terminal domain. The segment at residues Lys291–Met350 is a DNA-binding region (homeobox). 3 disordered regions span residues Leu351 to Pro371, Leu385 to Leu405, and Ala423 to Glu474. A compositionally biased stretch (basic residues) spans Lys361–Pro371. A compositionally biased stretch (acidic residues) spans Leu429–Glu456.

This sequence belongs to the TALE/MEIS homeobox family.

The protein resides in the nucleus. This Mus musculus (Mouse) protein is Homeobox protein PKNOX2 (Pknox2).